The primary structure comprises 186 residues: Auxin-responsive protein IAA4 (186 aa).

The EAR-like (transcriptional repression) motif lies at 18 to 22 (LRLGL). The interval 25-62 (TEETVSCGKSNKRVLPEATEKEIESTGKTETASPPKAQ) is disordered. Positions 38-51 (VLPEATEKEIESTG) are enriched in basic and acidic residues. A PB1 domain is found at 88–175 (GNYVKVSMDG…SCKRLRIMKG (88 aa)).

It belongs to the Aux/IAA family. Homodimers and heterodimers. Interacts with TPL. In terms of tissue distribution, preferentially expressed in stems, leaves and flowers.

The protein localises to the nucleus. In terms of biological role, aux/IAA proteins are short-lived transcriptional factors that function as repressors of early auxin response genes at low auxin concentrations. Repression is thought to result from the interaction with auxin response factors (ARFs), proteins that bind to the auxin-responsive promoter element (AuxRE). Formation of heterodimers with ARF proteins may alter their ability to modulate early auxin response genes expression. This Arabidopsis thaliana (Mouse-ear cress) protein is Auxin-responsive protein IAA4 (IAA4).